The sequence spans 484 residues: Aldehyde dehydrogenase family 3 member A2 (484 aa).

At 1–463 (MERQVQRLRQ…FLLKQFNKGR (463 aa)) the chain is on the cytoplasmic side. 185–190 (GNTAVG) lines the NAD(+) pocket. Residues Glu-207 and Cys-241 contribute to the active site. The residue at position 293 (Ser-293) is a Phosphoserine. Residues 464–484 (LQLLLLVCLVAVAAVIVKDQL) form a helical membrane-spanning segment. The Prevents secretion from ER signature appears at 481-484 (KDQL).

The protein belongs to the aldehyde dehydrogenase family. As to quaternary structure, homodimer. In terms of processing, the N-terminus is blocked.

It localises to the microsome membrane. Its subcellular location is the endoplasmic reticulum membrane. It catalyses the reaction an aldehyde + NAD(+) + H2O = a carboxylate + NADH + 2 H(+). The catalysed reaction is a fatty aldehyde + NAD(+) + H2O = a fatty acid + NADH + 2 H(+). It carries out the reaction (2E)-hexadecenal + NAD(+) + H2O = (E)-hexadec-2-enoate + NADH + 2 H(+). The enzyme catalyses hexadecanoate + NADH + 2 H(+) = hexadecanal + NAD(+) + H2O. It catalyses the reaction 22-oxodocosanoate + NAD(+) + H2O = docosanedioate + NADH + 2 H(+). The catalysed reaction is 2,6,10,14-tetramethylpentadecanal + NAD(+) + H2O = 2,6,10,14-tetramethylpentadecanoate + NADH + 2 H(+). It carries out the reaction octadecanal + NAD(+) + H2O = octadecanoate + NADH + 2 H(+). The enzyme catalyses dodecanoate + NADH + 2 H(+) = dodecanal + NAD(+) + H2O. It catalyses the reaction decanal + NAD(+) + H2O = decanoate + NADH + 2 H(+). The catalysed reaction is tetradecanal + NAD(+) + H2O = tetradecanoate + NADH + 2 H(+). It carries out the reaction octanal + NAD(+) + H2O = octanoate + NADH + 2 H(+). The enzyme catalyses heptanal + NAD(+) + H2O = heptanoate + NADH + 2 H(+). It catalyses the reaction (2E,6E)-farnesal + NAD(+) + H2O = (2E,6E)-farnesoate + NADH + 2 H(+). Its function is as follows. Catalyzes the oxidation of medium and long-chain aliphatic aldehydes to fatty acids. Active on a variety of saturated and unsaturated aliphatic aldehydes between 6 and 24 carbons in length. Responsible for conversion of the sphingosine 1-phosphate (S1P) degradation product hexadecenal to hexadecenoic acid. This chain is Aldehyde dehydrogenase family 3 member A2 (Aldh3a2), found in Rattus norvegicus (Rat).